Consider the following 767-residue polypeptide: MVGPFKKILHAHNQRFPPSSSSSLDPVVDDSSRKQTRIILSYLLHLSLSLHITYSLCLLHFFFGSSNPFSPMEESNNSAVVDFPDNFMDQLLWEECWEEEATQHDQALSSPSGLKERVACAMGHLQEVMGERELLIQLWVPVETRSGRVLSTEEQPYSINTFSQSQSLALYRDASAGYSFAAEVGSEQLVGLPGRVFLRRMPEWTPDVRFFRKEEYPRIGYARRYQVRATLALPLFQGTSGNCVAVMEMVTTHRNLEYASQLSTICHALEAFDLRTSQTSIVPASLKVTSSSSSSSRTEVASILQGICSSHGLPLAVTWGHQDSSSCLSALISASYAADHGSRCFLAACSEHHLLGGEGIAGRAFATKKQCFATDVAIFSKWSYPLSHYAKMFDLHAALAVPILTRGNRTVQFVLELFFPRDCLDIQTHSLTLASQLKLRFQSSPHLMVDDNQIAEEVRDAATPPLTQEDPKGKQVSFSFSSASSLENRKRKTKAEKDITLDTLRQHFAGSLKDAAKNIGVCPTTLKRICRQNGISRWPSRKIKKVGHSLRKLQVVMDSVEGVQGSLHLASFYSSFPQLQSSSSSSFPFINPTQTVHVPPKSPPSSSGSQSSSGSSTCCSSEEQQLGGFQKPALSHPQLLTLSSMHEDQRPVRVTSSLPPLPSATTPRKAKDGMKVKAMFGDSMLRMSLLPHSRLTDLRREIAKRFGMDDVLRSNFSLKYLDDDQEWVLLTCDADLEECIQVYKSSSLKETIRILVHHPLSRPSFGS.

Disordered stretches follow at residues 462–494 (ATPP…RKTK), 590–622 (INPT…CSSE), and 646–672 (HEDQ…KAKD). The region spanning 482–566 (SASSLENRKR…MDSVEGVQGS (85 aa)) is the RWP-RK domain. The stretch at 485 to 506 (SLENRKRKTKAEKDITLDTLRQ) forms a coiled coil. Low complexity-rich tracts occupy residues 604-622 (PSSS…CSSE) and 655-667 (TSSL…ATTP). One can recognise a PB1 domain in the interval 673 to 759 (GMKVKAMFGD…ETIRILVHHP (87 aa)).

It is found in the nucleus. In terms of biological role, probable transcription factor. The chain is Protein NLP3 (NLP3) from Arabidopsis thaliana (Mouse-ear cress).